The following is a 477-amino-acid chain: Small ribosomal subunit protein uS5m (477 aa).

This sequence belongs to the universal ribosomal protein uS5 family. In terms of assembly, component of the mitochondrial small ribosomal subunit (mt-SSU). Mature N.crassa 74S mitochondrial ribosomes consist of a small (37S) and a large (54S) subunit. The 37S small subunit contains a 16S ribosomal RNA (16S mt-rRNA) and 32 different proteins. The 54S large subunit contains a 23S rRNA (23S mt-rRNA) and 42 different proteins. uS3m, uS4m and uS5m form the narrow entry site of the mRNA channel.

Its subcellular location is the mitochondrion. Its function is as follows. Component of the mitochondrial ribosome (mitoribosome), a dedicated translation machinery responsible for the synthesis of mitochondrial genome-encoded proteins, including at least some of the essential transmembrane subunits of the mitochondrial respiratory chain. The mitoribosomes are attached to the mitochondrial inner membrane and translation products are cotranslationally integrated into the membrane. This Neurospora crassa (strain ATCC 24698 / 74-OR23-1A / CBS 708.71 / DSM 1257 / FGSC 987) protein is Small ribosomal subunit protein uS5m (mrps5).